The primary structure comprises 103 residues: Small ribosomal subunit protein bS20 (103 aa).

Over residues 1–20 (MATAKPKKKNPRLASGRKRV) the composition is skewed to basic residues. The segment at 1-31 (MATAKPKKKNPRLASGRKRVRQDTKLNAANT) is disordered.

The protein belongs to the bacterial ribosomal protein bS20 family.

Functionally, binds directly to 16S ribosomal RNA. The polypeptide is Small ribosomal subunit protein bS20 (Polaromonas sp. (strain JS666 / ATCC BAA-500)).